A 431-amino-acid polypeptide reads, in one-letter code: Enolase (431 aa).

Gln167 is a (2R)-2-phosphoglycerate binding site. The Proton donor role is filled by Glu209. Asp246, Glu289, and Asp316 together coordinate Mg(2+). (2R)-2-phosphoglycerate contacts are provided by Lys341, Arg370, Ser371, and Lys392. The active-site Proton acceptor is the Lys341.

This sequence belongs to the enolase family. Component of the RNA degradosome, a multiprotein complex involved in RNA processing and mRNA degradation. Requires Mg(2+) as cofactor.

The protein resides in the cytoplasm. The protein localises to the secreted. It localises to the cell surface. It carries out the reaction (2R)-2-phosphoglycerate = phosphoenolpyruvate + H2O. It participates in carbohydrate degradation; glycolysis; pyruvate from D-glyceraldehyde 3-phosphate: step 4/5. Its function is as follows. Catalyzes the reversible conversion of 2-phosphoglycerate (2-PG) into phosphoenolpyruvate (PEP). It is essential for the degradation of carbohydrates via glycolysis. The chain is Enolase from Shewanella baltica (strain OS155 / ATCC BAA-1091).